Consider the following 83-residue polypeptide: uncharacterized protein (83 aa).

An N-terminal signal peptide occupies residues 1 to 20 (MRRALTLAVLATCAVLPALA).

This sequence to P.denitrificans and M.extorquens MoxJ.

This is an uncharacterized protein from Paracoccus denitrificans.